A 106-amino-acid chain; its full sequence is MSKDKSWLDFDHLAEDDLREALKPPSMYKVILMNDDYTPMEFVIDVLQKFFSYDVERATQLMLTVHYQGKAICGVFTAEVAETKVALVNKYARENDHPLLCTLEKA.

Belongs to the ClpS family. Binds to the N-terminal domain of the chaperone ClpA.

Involved in the modulation of the specificity of the ClpAP-mediated ATP-dependent protein degradation. The sequence is that of ATP-dependent Clp protease adapter protein ClpS from Cronobacter sakazakii (strain ATCC BAA-894) (Enterobacter sakazakii).